A 302-amino-acid polypeptide reads, in one-letter code: Myb-related protein Hv33 (302 aa).

2 HTH myb-type domains span residues 11 to 63 (QPKV…INYL) and 64 to 118 (RPDL…KKKL). DNA-binding regions (H-T-H motif) lie at residues 39–63 (WSSV…INYL) and 91–114 (WSQI…NSCI). Residues 137–158 (ATAAAALPDAEEEDRKPLCPAV) are disordered.

As to expression, germinating seed and apical meristem of shoot and root.

The protein resides in the nucleus. Functionally, possible transcription activator in response to an external signal. May be involved in the regulation of flavonoid biosynthesis. In Hordeum vulgare (Barley), this protein is Myb-related protein Hv33 (MYB2).